The primary structure comprises 116 residues: Ig heavy chain V region 441 (116 aa).

The signal sequence occupies residues 1–18; sequence MDFGLIFFIVALLKGVQC. The Ig-like domain maps to 19–116; the sequence is EVKLLESGGG…EDTALYYCAR (98 aa).

The sequence is that of Ig heavy chain V region 441 from Mus musculus (Mouse).